Reading from the N-terminus, the 305-residue chain is Ornithine carbamoyltransferase (305 aa).

Carbamoyl phosphate-binding positions include 52–55 (STRT), Gln-79, Arg-103, and 130–133 (HPLQ). Residues Asn-162, Asp-224, and 228-229 (SM) each bind L-ornithine. Residues 264–265 (CL) and Arg-292 contribute to the carbamoyl phosphate site.

The protein belongs to the aspartate/ornithine carbamoyltransferase superfamily. OTCase family.

It localises to the cytoplasm. It catalyses the reaction carbamoyl phosphate + L-ornithine = L-citrulline + phosphate + H(+). It functions in the pathway amino-acid biosynthesis; L-arginine biosynthesis; L-arginine from L-ornithine and carbamoyl phosphate: step 1/3. In terms of biological role, reversibly catalyzes the transfer of the carbamoyl group from carbamoyl phosphate (CP) to the N(epsilon) atom of ornithine (ORN) to produce L-citrulline. The sequence is that of Ornithine carbamoyltransferase from Pyrobaculum aerophilum (strain ATCC 51768 / DSM 7523 / JCM 9630 / CIP 104966 / NBRC 100827 / IM2).